A 403-amino-acid polypeptide reads, in one-letter code: Ubiquitin-like modifier-activating enzyme 5 (403 aa).

ATP contacts are provided by Gly-81, Asp-102, Lys-125, Asn-148, and Asn-182. 2 residues coordinate Zn(2+): Cys-224 and Cys-227. Cys-248 serves as the catalytic Glycyl thioester intermediate. Cys-301 and Cys-306 together coordinate Zn(2+). The segment covering 306-315 (CRKQQEEYKK) has biased composition (basic and acidic residues). The segment at 306 to 337 (CRKQQEEYKKRAPAQPTQETAPQEEEEVVHED) is disordered. The UFM1-interacting sequence (UIS) signature appears at 333–345 (VVHEDNEWGIELV). The linker stretch occupies residues 346–376 (SEVSEEELKNSSGPVPTLPEGITVAYTVPKK). 2 positions are modified to phosphoserine: Ser-357 and Ser-392. The UFC1-binding sequence (UFC) motif lies at 388–403 (DSGESLEDLMARMKKM).

This sequence belongs to the ubiquitin-activating E1 family. UBA5 subfamily. As to quaternary structure, homodimer; homodimerization is required for UFM1 activation. Interacts (via UIS motif) with UFM1; binds UFM1 via a trans-binding mechanism in which UFM1 interacts with distinct sites in both subunits of the UBA5 homodimer. Interacts (via C-terminus) with UFC1. Interacts (via UIS motif) with GABARAPL2 and, with lower affinity, with GABARAP and GABARAPL1.

It localises to the cytoplasm. Its subcellular location is the nucleus. The protein resides in the endoplasmic reticulum membrane. It is found in the golgi apparatus. Its function is as follows. E1-like enzyme which specifically catalyzes the first step in ufmylation. Activates UFM1 by first adenylating its C-terminal glycine residue with ATP, and thereafter linking this residue to the side chain of a cysteine residue in E1, yielding a UFM1-E1 thioester and free AMP. Activates UFM1 via a trans-binding mechanism, in which UFM1 interacts with distinct sites in both subunits of the UBA5 homodimer. Trans-binding also promotes stabilization of the UBA5 homodimer, and enhances ATP-binding. Transfer of UFM1 from UBA5 to the E2-like enzyme UFC1 also takes place using a trans mechanism. Ufmylation plays a key role in various processes, such as ribosome recycling, response to DNA damage, interferon response or reticulophagy (also called ER-phagy). Ufmylation is essential for erythroid differentiation of both megakaryocytes and erythrocytes. This chain is Ubiquitin-like modifier-activating enzyme 5, found in Rattus norvegicus (Rat).